Here is a 581-residue protein sequence, read N- to C-terminus: Kelch-like protein 30 (581 aa).

One can recognise a BTB domain in the interval 33 to 100; sequence ADVTLLVGDQ…VYTGRLTITQ (68 aa). The region spanning 135-237 is the BACK domain; sequence CLGICEFGEQ…PRPCVQQLLA (103 aa). 6 Kelch repeats span residues 280 to 327, 328 to 378, 379 to 423, 425 to 472, 474 to 514, and 515 to 564; these read EEDE…ALNS, DVYV…ALNG, EIYA…GCQG, LYLV…ALNG, LYLI…PLGD, and LLYV…TIFL.

The polypeptide is Kelch-like protein 30 (Klhl30) (Mus musculus (Mouse)).